A 177-amino-acid chain; its full sequence is Probable chemoreceptor glutamine deamidase CheD (177 aa).

It belongs to the CheD family.

It catalyses the reaction L-glutaminyl-[protein] + H2O = L-glutamyl-[protein] + NH4(+). Probably deamidates glutamine residues to glutamate on methyl-accepting chemotaxis receptors (MCPs), playing an important role in chemotaxis. The chain is Probable chemoreceptor glutamine deamidase CheD from Pseudomonas savastanoi pv. phaseolicola (strain 1448A / Race 6) (Pseudomonas syringae pv. phaseolicola (strain 1448A / Race 6)).